The chain runs to 287 residues: Probable ketose 3-epimerase (287 aa).

E152 (proton donor/acceptor) is an active-site residue. E152 and D185 together coordinate Mn(2+). H188 is a substrate binding site. H211 lines the Mn(2+) pocket. Residue R217 coordinates substrate. E246 functions as the Proton donor/acceptor in the catalytic mechanism. E246 contributes to the Mn(2+) binding site.

The protein belongs to the hyi family. The cofactor is Mn(2+).

Its function is as follows. Probably catalyzes the epimerization of ketopentoses and/or ketohexoses at the C3 position. The sequence is that of Probable ketose 3-epimerase from Synechocystis sp. (strain ATCC 27184 / PCC 6803 / Kazusa).